The primary structure comprises 322 residues: Tetraacyldisaccharide 4'-kinase (322 aa).

54–61 is a binding site for ATP; sequence SVGGTGKT.

Belongs to the LpxK family.

It carries out the reaction a lipid A disaccharide + ATP = a lipid IVA + ADP + H(+). It functions in the pathway glycolipid biosynthesis; lipid IV(A) biosynthesis; lipid IV(A) from (3R)-3-hydroxytetradecanoyl-[acyl-carrier-protein] and UDP-N-acetyl-alpha-D-glucosamine: step 6/6. Transfers the gamma-phosphate of ATP to the 4'-position of a tetraacyldisaccharide 1-phosphate intermediate (termed DS-1-P) to form tetraacyldisaccharide 1,4'-bis-phosphate (lipid IVA). The chain is Tetraacyldisaccharide 4'-kinase from Francisella tularensis subsp. holarctica (strain FTNF002-00 / FTA).